Here is a 429-residue protein sequence, read N- to C-terminus: Serine hydroxymethyltransferase (429 aa).

Residues L127 and 131–133 (GHL) contribute to the (6S)-5,6,7,8-tetrahydrofolate site. K236 carries the post-translational modification N6-(pyridoxal phosphate)lysine. Position 252 (E252) interacts with (6S)-5,6,7,8-tetrahydrofolate.

It belongs to the SHMT family. As to quaternary structure, homodimer. The cofactor is pyridoxal 5'-phosphate.

The protein resides in the cytoplasm. The catalysed reaction is (6R)-5,10-methylene-5,6,7,8-tetrahydrofolate + glycine + H2O = (6S)-5,6,7,8-tetrahydrofolate + L-serine. It participates in one-carbon metabolism; tetrahydrofolate interconversion. It functions in the pathway amino-acid biosynthesis; glycine biosynthesis; glycine from L-serine: step 1/1. In terms of biological role, catalyzes the reversible interconversion of serine and glycine with tetrahydrofolate (THF) serving as the one-carbon carrier. This reaction serves as the major source of one-carbon groups required for the biosynthesis of purines, thymidylate, methionine, and other important biomolecules. Also exhibits THF-independent aldolase activity toward beta-hydroxyamino acids, producing glycine and aldehydes, via a retro-aldol mechanism. This chain is Serine hydroxymethyltransferase, found in Rhodospirillum centenum (strain ATCC 51521 / SW).